The sequence spans 442 residues: MTNIWHTAPVSALSGEITICGDKSMSHRALLLAALAEGQTEIRGFLPCADCLATAQALRALWVDIQREKEIVTIRGVGFLGLQPPKAPLNMQNSGTSMRLLAGILAAQRFESVLCGDESLEKRPMQRIITPLVQMGAKIVSHSNFTAPLHISGRPLTGIDYALPLPSAQLKSCLILAGLLADGTTRLHTCGISRDHTERMLPLFGGALETQKEQIIVTGGQKLHGCVLEIVGDLSAAAFFMVAALIAPRAEVVIRNVGINPTRSAIITLLQKMGGRIELHHQRFWGAEPVADIVVYHSKLRGITVAPEWIANAIDELPIFFIAAACAEGTTFVGNLSELRVKESDRLAAMAQNLQTLGVACDVGADFIHIYGRSDRQFLPARVNSFGDHRIAMSLAVAGVRAAGELLIDDGAVAAVSMPQFRDFAAAIGMNVGEKDAKNCHD.

Residues Lys23, Ser24, and Arg28 each contribute to the 3-phosphoshikimate site. Lys23 contacts phosphoenolpyruvate. Gly95 and Arg123 together coordinate phosphoenolpyruvate. Residues Ser167, Gln169, Asp315, and Lys342 each contribute to the 3-phosphoshikimate site. Gln169 provides a ligand contact to phosphoenolpyruvate. The active-site Proton acceptor is Asp315. Phosphoenolpyruvate-binding residues include Arg346 and Arg390.

It belongs to the EPSP synthase family. In terms of assembly, monomer.

Its subcellular location is the cytoplasm. The catalysed reaction is 3-phosphoshikimate + phosphoenolpyruvate = 5-O-(1-carboxyvinyl)-3-phosphoshikimate + phosphate. The protein operates within metabolic intermediate biosynthesis; chorismate biosynthesis; chorismate from D-erythrose 4-phosphate and phosphoenolpyruvate: step 6/7. Its function is as follows. Catalyzes the transfer of the enolpyruvyl moiety of phosphoenolpyruvate (PEP) to the 5-hydroxyl of shikimate-3-phosphate (S3P) to produce enolpyruvyl shikimate-3-phosphate and inorganic phosphate. This Dichelobacter nodosus (strain VCS1703A) protein is 3-phosphoshikimate 1-carboxyvinyltransferase.